Reading from the N-terminus, the 434-residue chain is MESRGKILMERYELGRLLGKGTFGKVHYARNLESNQSVAIKMMDKQQILKVGLSEQIRREITTMRLVAHKNIVQLHEVMATRNKIYFVMEYVKGGELFEKVAKRGKLTEVVAHKYFQQLISAVDYCHSRGVYHRDLKPENLLLDENENLKVSDFGLSALSESKRQDGLLHTTCGTPAYVAPEVISKIGYDGAKSDIWSCGVILFVLVAGYLPFQGPNLMEMYRKIQHGEFRCPGWFSRKLQKLLYKIMDPNPSTRISIQKIKESTWFRKGPEENRILKERTLNENTTKNVAPVLGVRRKKNAHEDVKPMSVTNLNAFEIISFSKGFDLSGMFIVKEWRNEARFTSDKSASTIISKLEDVAKALNLRVRKKDNGVVKMQGRKEGRNGVLQFDIEIFEVTTSYHIIEMKQTSGDSLEYRQLLEEGIRPALKDIVLA.

The region spanning 12–267 is the Protein kinase domain; it reads YELGRLLGKG…IQKIKESTWF (256 aa). ATP contacts are provided by residues 18–26 and K41; that span reads LGKGTFGKV. The active-site Proton acceptor is the D135. The interval 153–182 is activation loop; sequence DFGLSALSESKRQDGLLHTTCGTPAYVAPE. One can recognise an NAF domain in the interval 298–333; sequence RKKNAHEDVKPMSVTNLNAFEIISFSKGFDLSGMFI. Positions 338 to 367 are PPI; that stretch reads RNEARFTSDKSASTIISKLEDVAKALNLRV.

Belongs to the protein kinase superfamily. CAMK Ser/Thr protein kinase family. SNF1 subfamily. Mn(2+) is required as a cofactor.

The catalysed reaction is L-seryl-[protein] + ATP = O-phospho-L-seryl-[protein] + ADP + H(+). It carries out the reaction L-threonyl-[protein] + ATP = O-phospho-L-threonyl-[protein] + ADP + H(+). Involved in salt stress tolerance. CIPK serine-threonine protein kinases interact with CBL proteins. Binding of a CBL protein to the regulatory NAF domain of CIPK protein lead to the activation of the kinase in a calcium-dependent manner. The protein is CBL-interacting protein kinase 15 (CIPK15) of Oryza sativa subsp. japonica (Rice).